The sequence spans 334 residues: Testis-specific Y-encoded protein 1 (334 aa).

Residue Ser4 is modified to Phosphoserine. 2 disordered regions span residues 27 to 46 and 96 to 146; these read LEGE…PAGD and NEGE…AERR. Composition is skewed to basic and acidic residues over residues 96–108 and 115–128; these read NEGE…KQEG and ELEK…DSKD.

Belongs to the nucleosome assembly protein (NAP) family. Phosphorylated. In terms of tissue distribution, testis.

Its subcellular location is the cytoplasm. It is found in the nucleus. In terms of biological role, may be involved in sperm differentiation and proliferation. This is Testis-specific Y-encoded protein 1 (Tspy1) from Rattus norvegicus (Rat).